The following is a 356-amino-acid chain: MNITKLTPWFLFSCLILLSDYIKVNSSISPSSEQTQEDGFFGFKPTKLFVFGDSYADTGNTPFLIVPSWRFPNGITFPGIPTGRFSDGRVSTDYLAKYIGVRTPITYKWGKYGRPRLAVKRGMNFAYGGAGAFETMFKLVPTASVQIDSFEQLLMRNVYSPADLNSSVAFFSIIGNDYLTYDRRNGSEEGRSALTRKVVKQILLDVKRIKDLGVRKVLVALSPPQKCLPKLVTPKGCDTNDTSTYLHNSLLRKGLIKLNDKEINNNDKSFMTLDLYNAFVTIFKNKGVSGVSTFPDPFKACCATKRGTFCGDRSLSGKKLYTLCDDPKSFFFWDNVHISDQGWRSVFSLLLPDSQF.

Positions 1-26 (MNITKLTPWFLFSCLILLSDYIKVNS) are cleaved as a signal peptide. Asparagine 25 carries an N-linked (GlcNAc...) asparagine glycan. Serine 54 (nucleophile) is an active-site residue. Residues asparagine 165, asparagine 185, and asparagine 240 are each glycosylated (N-linked (GlcNAc...) asparagine). Catalysis depends on residues aspartate 334 and histidine 337.

Belongs to the 'GDSL' lipolytic enzyme family.

It localises to the secreted. This is GDSL esterase/lipase At2g36325 from Arabidopsis thaliana (Mouse-ear cress).